Consider the following 107-residue polypeptide: U1-lycotoxin-Ls1x (107 aa).

The first 20 residues, 1–20, serve as a signal peptide directing secretion; sequence MMKVLVVVALLVTLISYSSS. Positions 21-41 are excised as a propeptide; that stretch reads EGIDDLEADELLSLMANEHPR. 4 cysteine pairs are disulfide-bonded: Cys44-Cys59, Cys51-Cys68, Cys58-Cys86, and Cys70-Cys84.

This sequence belongs to the neurotoxin 19 (CSTX) family. 04 (U1-Lctx) subfamily. Expressed by the venom gland.

It localises to the secreted. This Lycosa singoriensis (Wolf spider) protein is U1-lycotoxin-Ls1x.